Consider the following 132-residue polypeptide: Chemokine-like protein TAFA-5 (132 aa).

Residues 1–43 (MAPSPRTSSRQDATALPSMSSTFWAFMILASLLIAYCSQLAAG) form the signal peptide. Residue Asn113 is glycosylated (N-linked (GlcNAc...) asparagine).

Belongs to the TAFA family. As to expression, expressed in the subcutaneous, brown, epididymal and perirenal adipose tissue (at protein level).

It localises to the secreted. Its function is as follows. Acts as a chemokine-like protein by regulating cell proliferation and migration through activation of G protein-coupled receptors (GPCRs), such as S1PR2 and FPR2. Stimulates chemotactic migration of macrophages mediated by the MAPK3/ERK1 and AKT1 pathway. Blocks TNFSF11/RANKL-induced osteoclast formation from macrophages by inhibiting up-regulation of osteoclast fusogenic and differentiation genes. Stimulation of macrophage migration and inhibition of osteoclast formation is mediated through the GPCR FPR2. Acts as an adipokine by negatively regulating vascular smooth muscle cell (VSMC) proliferation and migration in response to platelet-derived growth factor stimulation via GPCR S1PR2 and G protein GNA12/GNA13-transmitted RHOA signaling. Inhibits injury-induced cell proliferation and neointima formation in the femoral arteries. The chain is Chemokine-like protein TAFA-5 (Tafa5) from Mus musculus (Mouse).